The sequence spans 471 residues: Alpha-galactosidase 6 (471 aa).

A signal peptide spans 1–18 (MFAFYFLTACISLKGVFG). Cysteine 42 and cysteine 74 are joined by a disulfide. Residues aspartate 72 and aspartate 73 each coordinate substrate. Residue asparagine 105 is glycosylated (N-linked (GlcNAc...) asparagine). Cysteine 121 and cysteine 151 are disulfide-bonded. Residue lysine 147 coordinates substrate. Aspartate 149 acts as the Nucleophile in catalysis. The N-linked (GlcNAc...) asparagine glycan is linked to asparagine 175. Residue arginine 205 coordinates substrate. Aspartate 209 (proton donor) is an active-site residue. 2 disulfides stabilise this stretch: cysteine 221–cysteine 237 and cysteine 223–cysteine 230. Glutamine 251 provides a ligand contact to substrate. N-linked (GlcNAc...) asparagine glycans are attached at residues asparagine 270, asparagine 370, asparagine 403, asparagine 422, asparagine 435, and asparagine 454.

The protein belongs to the glycosyl hydrolase 27 family. As to quaternary structure, homotetramer.

The protein resides in the secreted. The enzyme catalyses Hydrolysis of terminal, non-reducing alpha-D-galactose residues in alpha-D-galactosides, including galactose oligosaccharides, galactomannans and galactolipids.. The polypeptide is Alpha-galactosidase 6 (MEL6) (Saccharomyces cerevisiae (Baker's yeast)).